Reading from the N-terminus, the 291-residue chain is ATP synthase gamma chain (291 aa).

It belongs to the ATPase gamma chain family. F-type ATPases have 2 components, CF(1) - the catalytic core - and CF(0) - the membrane proton channel. CF(1) has five subunits: alpha(3), beta(3), gamma(1), delta(1), epsilon(1). CF(0) has three main subunits: a, b and c.

The protein resides in the cell inner membrane. Produces ATP from ADP in the presence of a proton gradient across the membrane. The gamma chain is believed to be important in regulating ATPase activity and the flow of protons through the CF(0) complex. The chain is ATP synthase gamma chain from Ruegeria pomeroyi (strain ATCC 700808 / DSM 15171 / DSS-3) (Silicibacter pomeroyi).